The primary structure comprises 997 residues: FIP1[III]-like protein (997 aa).

Disordered regions lie at residues 250–272 (ITSNEASRSDVSHSYGSKDLNSV), 289–475 (AGSF…ETEG), 534–553 (SRSSFDLNQRNSRSSFKEED), and 880–900 (QGKVSNQSKKRFSNGGDTIEQ). The segment covering 261 to 272 (SHSYGSKDLNSV) has biased composition (polar residues). 4 stretches are compositionally biased toward basic and acidic residues: residues 309-323 (TPSDKEMLEKEKEES), 334-346 (SVERESSLGDRIR), 367-379 (ESLKDSATDDQRE), and 388-404 (RLAEHEAISIKRGEDSG). A Nuclear localization signal motif is present at residues 397-404 (IKRGEDSG). Residues 534-547 (SRSSFDLNQRNSRS) are compositionally biased toward polar residues. A coiled-coil region spans residues 930-963 (EIIEEVKGVEIDNERIQESLKKMEKRRERFKGTK).

Belongs to the FIP1 family. In terms of assembly, component of the cleavage and polyadenylation specificity factor (CPSF) complex. Forms a complex with cleavage and polyadenylation specificity factor (CPSF) subunits CLPS5, FIPS5, PAPS4, PCFS1, CSTF64 and CPSF30.

Its subcellular location is the nucleus. In terms of biological role, component of the cleavage and polyadenylation specificity factor (CPSF) complex that plays a key role in pre-mRNA 3'-end formation, recognizing the AAUAAA signal sequence and interacting with poly(A) polymerase and other factors to bring about cleavage and poly(A) addition. FIP1L1 contributes to poly(A) site recognition and stimulates poly(A) addition. Binds to U-rich RNA sequence elements surrounding the poly(A) site. May act to tether poly(A) polymerase to the CPSF complex. This chain is FIP1[III]-like protein, found in Arabidopsis thaliana (Mouse-ear cress).